The following is a 538-amino-acid chain: Mevalonate kinase erg12 (538 aa).

The tract at residues 1–87 (MGNPRGRRTN…RNMSRKPSSP (87 aa)) is disordered. Residues 9-29 (TNGSIKTSKGTQRGTVSNLLS) show a composition bias toward polar residues. Positions 57 to 69 (TTPSTTESTLKTT) are enriched in low complexity. Residues lysine 99, serine 231, and 236-242 (GAGLGSS) each bind ATP. Positions 242 and 287 each coordinate Mg(2+). Residue aspartate 298 is the Proton acceptor of the active site.

This sequence belongs to the GHMP kinase family. Mevalonate kinase subfamily. Homodimer. Requires Mg(2+) as cofactor.

Its subcellular location is the cytoplasm. It is found in the cytosol. The enzyme catalyses (R)-mevalonate + ATP = (R)-5-phosphomevalonate + ADP + H(+). The protein operates within isoprenoid biosynthesis; isopentenyl diphosphate biosynthesis via mevalonate pathway; isopentenyl diphosphate from (R)-mevalonate: step 1/3. Mevalonate kinase; part of the second module of ergosterol biosynthesis pathway that includes the middle steps of the pathway. Erg12 converts mevalonate into 5-phosphomevalonate. The second module is carried out in the vacuole and involves the formation of farnesyl diphosphate, which is also an important intermediate in the biosynthesis of ubiquinone, dolichol, heme and prenylated proteins. Activity by the mevalonate kinase erg12 (AFUA_4G07780) first converts mevalonate into 5-phosphomevalonate. 5-phosphomevalonate is then further converted to 5-diphosphomevalonate by the phosphomevalonate kinase erg8 (AFUA_5G10680). The diphosphomevalonate decarboxylase mvd1 (AFUA_4G07130) then produces isopentenyl diphosphate. The isopentenyl-diphosphate delta-isomerase idi1 (AFUA_6G11160) then catalyzes the 1,3-allylic rearrangement of the homoallylic substrate isopentenyl (IPP) to its highly electrophilic allylic isomer, dimethylallyl diphosphate (DMAPP). Finally the farnesyl diphosphate synthase erg20 (AFUA_5G02450) catalyzes the sequential condensation of isopentenyl pyrophosphate with dimethylallyl pyrophosphate, and then with the resultant geranylpyrophosphate to the ultimate product farnesyl pyrophosphate. The chain is Mevalonate kinase erg12 from Aspergillus fumigatus (strain ATCC MYA-4609 / CBS 101355 / FGSC A1100 / Af293) (Neosartorya fumigata).